Reading from the N-terminus, the 190-residue chain is Holliday junction branch migration complex subunit RuvA (190 aa).

The domain I stretch occupies residues 1 to 65; sequence MIGNLRGIVD…ENVTQLYGFI (65 aa). Positions 66 to 143 are domain II; the sequence is SKEEQQCLRL…KLEINNNHFH (78 aa). Residues 144 to 147 form a flexible linker region; it reads SISE. Residues 147–190 form a domain III region; it reads EDALSALINLGYERTKAYDTIKKIEDESPNLDTKDIIRMALKTI.

The protein belongs to the RuvA family. As to quaternary structure, homotetramer. Forms an RuvA(8)-RuvB(12)-Holliday junction (HJ) complex. HJ DNA is sandwiched between 2 RuvA tetramers; dsDNA enters through RuvA and exits via RuvB. An RuvB hexamer assembles on each DNA strand where it exits the tetramer. Each RuvB hexamer is contacted by two RuvA subunits (via domain III) on 2 adjacent RuvB subunits; this complex drives branch migration. In the full resolvosome a probable DNA-RuvA(4)-RuvB(12)-RuvC(2) complex forms which resolves the HJ.

The protein resides in the cytoplasm. The RuvA-RuvB-RuvC complex processes Holliday junction (HJ) DNA during genetic recombination and DNA repair, while the RuvA-RuvB complex plays an important role in the rescue of blocked DNA replication forks via replication fork reversal (RFR). RuvA specifically binds to HJ cruciform DNA, conferring on it an open structure. The RuvB hexamer acts as an ATP-dependent pump, pulling dsDNA into and through the RuvAB complex. HJ branch migration allows RuvC to scan DNA until it finds its consensus sequence, where it cleaves and resolves the cruciform DNA. The chain is Holliday junction branch migration complex subunit RuvA from Wolbachia pipientis subsp. Culex pipiens (strain wPip).